Here is a 93-residue protein sequence, read N- to C-terminus: RNA-binding protein Hfq (93 aa).

The Sm domain occupies 9-68 (DPFLNALRKERIPVSIFLVNGIKLQGQIESFDQYVVLLKNAVSQMVYKHAISTVVPARNP). Over residues 74–86 (PAMAAGATAAPAA) the composition is skewed to low complexity. Residues 74–93 (PAMAAGATAAPAADEGYGNQ) form a disordered region.

The protein belongs to the Hfq family. In terms of assembly, homohexamer.

Functionally, RNA chaperone that binds small regulatory RNA (sRNAs) and mRNAs to facilitate mRNA translational regulation in response to envelope stress, environmental stress and changes in metabolite concentrations. Also binds with high specificity to tRNAs. In Alcanivorax borkumensis (strain ATCC 700651 / DSM 11573 / NCIMB 13689 / SK2), this protein is RNA-binding protein Hfq.